A 172-amino-acid chain; its full sequence is 6,7-dimethyl-8-ribityllumazine synthase (172 aa).

Residues F22 and 56 to 58 (AFE) each bind 5-amino-6-(D-ribitylamino)uracil. 78–79 (LG) is a (2S)-2-hydroxy-3-oxobutyl phosphate binding site. A 5-amino-6-(D-ribitylamino)uracil-binding site is contributed by 80 to 82 (AII). The active-site Proton donor is the H88. Position 113 (F113) interacts with 5-amino-6-(D-ribitylamino)uracil. R127 serves as a coordination point for (2S)-2-hydroxy-3-oxobutyl phosphate.

The protein belongs to the DMRL synthase family.

The catalysed reaction is (2S)-2-hydroxy-3-oxobutyl phosphate + 5-amino-6-(D-ribitylamino)uracil = 6,7-dimethyl-8-(1-D-ribityl)lumazine + phosphate + 2 H2O + H(+). It functions in the pathway cofactor biosynthesis; riboflavin biosynthesis; riboflavin from 2-hydroxy-3-oxobutyl phosphate and 5-amino-6-(D-ribitylamino)uracil: step 1/2. Its function is as follows. Catalyzes the formation of 6,7-dimethyl-8-ribityllumazine by condensation of 5-amino-6-(D-ribitylamino)uracil with 3,4-dihydroxy-2-butanone 4-phosphate. This is the penultimate step in the biosynthesis of riboflavin. In Protochlamydia amoebophila (strain UWE25), this protein is 6,7-dimethyl-8-ribityllumazine synthase.